The primary structure comprises 1159 residues: DNA-directed RNA polymerase subunit beta (1159 aa).

Belongs to the RNA polymerase beta chain family. In terms of assembly, the RNAP catalytic core consists of 2 alpha, 1 beta, 1 beta' and 1 omega subunit. When a sigma factor is associated with the core the holoenzyme is formed, which can initiate transcription.

It catalyses the reaction RNA(n) + a ribonucleoside 5'-triphosphate = RNA(n+1) + diphosphate. DNA-dependent RNA polymerase catalyzes the transcription of DNA into RNA using the four ribonucleoside triphosphates as substrates. The polypeptide is DNA-directed RNA polymerase subunit beta (Deinococcus radiodurans (strain ATCC 13939 / DSM 20539 / JCM 16871 / CCUG 27074 / LMG 4051 / NBRC 15346 / NCIMB 9279 / VKM B-1422 / R1)).